An 89-amino-acid polypeptide reads, in one-letter code: Large ribosomal subunit protein uL29 (89 aa).

The protein belongs to the universal ribosomal protein uL29 family.

The polypeptide is Large ribosomal subunit protein uL29 (Frankia alni (strain DSM 45986 / CECT 9034 / ACN14a)).